The chain runs to 253 residues: MPKLQLSELLSLTKVEQTLRLAEVNVELEKLTAQERVVWALENLEGNPALSSSFGIQAAVMLQLVTEVKSDTPIILTDTGYLFPETYQFIDQLTDRLNLNLHVFTADESPNWQEARYGKLWEQGVEGIEKYNKLNKVQPMRRALDQLEIGVWFSGLRREQSGSRANLPILSIQNGVFKFLPVLDWTNKEVHYFLKEYDLPYHPLWDQGYLSVGDTHTTQKWEPGMSEEETRFFGLKRECGLHEDDGELDGSGI.

Catalysis depends on Cys239, which acts as the Nucleophile; cysteine thiosulfonate intermediate.

Belongs to the PAPS reductase family. CysH subfamily.

It localises to the cytoplasm. It catalyses the reaction [thioredoxin]-disulfide + sulfite + adenosine 3',5'-bisphosphate + 2 H(+) = [thioredoxin]-dithiol + 3'-phosphoadenylyl sulfate. Its pathway is sulfur metabolism; hydrogen sulfide biosynthesis; sulfite from sulfate: step 3/3. In terms of biological role, catalyzes the formation of sulfite from phosphoadenosine 5'-phosphosulfate (PAPS) using thioredoxin as an electron donor. The polypeptide is Phosphoadenosine 5'-phosphosulfate reductase (Aliivibrio fischeri (strain ATCC 700601 / ES114) (Vibrio fischeri)).